Reading from the N-terminus, the 310-residue chain is Beta-ketoacyl-[acyl-carrier-protein] synthase III (310 aa).

Residues Cys-116 and His-239 contribute to the active site. The tract at residues 240–244 (QANYR) is ACP-binding. The active site involves Asn-269.

Belongs to the thiolase-like superfamily. FabH family. Homodimer.

Its subcellular location is the cytoplasm. It catalyses the reaction malonyl-[ACP] + acetyl-CoA + H(+) = 3-oxobutanoyl-[ACP] + CO2 + CoA. It functions in the pathway lipid metabolism; fatty acid biosynthesis. Functionally, catalyzes the condensation reaction of fatty acid synthesis by the addition to an acyl acceptor of two carbons from malonyl-ACP. Catalyzes the first condensation reaction which initiates fatty acid synthesis and may therefore play a role in governing the total rate of fatty acid production. Possesses both acetoacetyl-ACP synthase and acetyl transacylase activities. Its substrate specificity determines the biosynthesis of branched-chain and/or straight-chain of fatty acids. This chain is Beta-ketoacyl-[acyl-carrier-protein] synthase III, found in Acholeplasma laidlawii (strain PG-8A).